We begin with the raw amino-acid sequence, 477 residues long: Tripartite motif-containing protein 72 (477 aa).

Zn(2+)-binding residues include cysteine 14, cysteine 17, cysteine 29, histidine 31, cysteine 34, cysteine 37, cysteine 53, cysteine 56, cysteine 86, histidine 89, cysteine 97, aspartate 100, cysteine 105, cysteine 108, histidine 114, and histidine 117. An RING-type zinc finger spans residues 14–57; it reads CPLCLQLFDAPVTAECGHSFCRACLIRVAGEPADDGTVACPCCQ. The segment at 81–122 adopts a B box-type zinc-finger fold; that stretch reads VPQGHCEEHLDPLSIYCEQDRTLVCGVCASLGSHRGHRLLPA. Positions 135–232 form a coiled coil; sequence QQKAQLQEAC…EKVLEEVADK (98 aa). Position 144 is an S-nitrosocysteine (cysteine 144). Phosphoserine is present on serine 255. Positions 271–475 constitute a B30.2/SPRY domain; that stretch reads DFKFQVWKKM…PLLLVGPDSE (205 aa).

Belongs to the TRIM/RBCC family. In terms of assembly, homodimer. Homooligomer; disulfide-linked. Oligomerizes on the phospholipid membrane. Interacts with DYSF and CAV3. In terms of processing, disulfide bond formation at Cys-242 occurs in case of membrane damage that cause the entry of the oxidized milieu of the extracellular space, resulting in homooligomerization. Post-translationally, S-nitrosylation at Cys-144 stabilizes TRIM72 and protects against oxidation-induced protein degradation and cell death.

It localises to the cell membrane. Its subcellular location is the sarcolemma. The protein localises to the cytoplasmic vesicle membrane. It carries out the reaction S-ubiquitinyl-[E2 ubiquitin-conjugating enzyme]-L-cysteine + [acceptor protein]-L-lysine = [E2 ubiquitin-conjugating enzyme]-L-cysteine + N(6)-ubiquitinyl-[acceptor protein]-L-lysine.. It functions in the pathway protein modification; protein ubiquitination. With respect to regulation, specifically binds phosphatidylserine. The binding to phospholipids enhances ubiquitination activity. Muscle-specific E3 ubiquitin-protein ligase that plays a central role in cell membrane repair by nucleating the assembly of the repair machinery at injury sites. Its ubiquitination activity is mediated by E2 ubiquitin-conjugating enzymes UBE2D1, UBE2D2 and UBE2D3. Acts as a sensor of oxidation: upon membrane damage, entry of extracellular oxidative environment results in disulfide bond formation and homooligomerization at the injury site. This oligomerization acts as a nucleation site for recruitment of TRIM72-containing vesicles to the injury site, leading to membrane patch formation. Probably acts upstream of the Ca(2+)-dependent membrane resealing process. Required for transport of DYSF to sites of cell injury during repair patch formation. Regulates membrane budding and exocytosis. May be involved in the regulation of the mobility of KCNB1-containing endocytic vesicles. This Rattus norvegicus (Rat) protein is Tripartite motif-containing protein 72.